The primary structure comprises 356 residues: tRNA-specific 2-thiouridylase MnmA 1 (356 aa).

Residues 8-15 (GMSGGVDS) and M34 contribute to the ATP site. Catalysis depends on C103, which acts as the Nucleophile. An intrachain disulfide couples C103 to C199. G127 provides a ligand contact to ATP. Residues 149–151 (KDQ) are interaction with tRNA. C199 (cysteine persulfide intermediate) is an active-site residue. An interaction with tRNA region spans residues 305–306 (RY).

The protein belongs to the MnmA/TRMU family.

It localises to the cytoplasm. It carries out the reaction S-sulfanyl-L-cysteinyl-[protein] + uridine(34) in tRNA + AH2 + ATP = 2-thiouridine(34) in tRNA + L-cysteinyl-[protein] + A + AMP + diphosphate + H(+). Catalyzes the 2-thiolation of uridine at the wobble position (U34) of tRNA, leading to the formation of s(2)U34. This Clostridium botulinum (strain Langeland / NCTC 10281 / Type F) protein is tRNA-specific 2-thiouridylase MnmA 1.